Here is a 555-residue protein sequence, read N- to C-terminus: Glypican-6 (555 aa).

The signal sequence occupies residues Met1–Ala23. Residues Pro348–Pro357 show a composition bias toward low complexity. The segment at Pro348–Ala376 is disordered. Ser529 is lipidated: GPI-anchor amidated serine. The propeptide at Ser530–Arg555 is removed in mature form.

It belongs to the glypican family.

It localises to the cell membrane. The protein resides in the secreted. The protein localises to the extracellular space. Functionally, cell surface proteoglycan that bears heparan sulfate. Putative cell surface coreceptor for growth factors, extracellular matrix proteins, proteases and anti-proteases. Enhances migration and invasion of cancer cells through WNT5A signaling. In Pongo abelii (Sumatran orangutan), this protein is Glypican-6 (GPC6).